The following is a 232-amino-acid chain: Ribose-5-phosphate isomerase A (232 aa).

Residues Thr28 to Thr31, Asp83 to Asp86, and Lys96 to Gly99 contribute to the substrate site. The active-site Proton acceptor is Glu105. Lys123 is a binding site for substrate.

Belongs to the ribose 5-phosphate isomerase family. Homodimer.

The catalysed reaction is aldehydo-D-ribose 5-phosphate = D-ribulose 5-phosphate. It participates in carbohydrate degradation; pentose phosphate pathway; D-ribose 5-phosphate from D-ribulose 5-phosphate (non-oxidative stage): step 1/1. Its function is as follows. Catalyzes the reversible conversion of ribose-5-phosphate to ribulose 5-phosphate. The polypeptide is Ribose-5-phosphate isomerase A (Nitrobacter hamburgensis (strain DSM 10229 / NCIMB 13809 / X14)).